Here is an 826-residue protein sequence, read N- to C-terminus: MTVSNNGMAMPSVPPKIDCSEAIQDSPKFRATVAQHAMYFNRLENRLNEMLRHITAMIDFSKNYTNTFYKLTVSVNQLCDESFSGNPLASTTFQGLSEAYAHTVNLFRTYFDHSNVVTFTKLSNFIKIELTKVAESRAHFENMSQSMDDALVKNASISRQKPADATEGRNALTAVGTCFAHTTLDYVANINIAHAHKDHMILDALWTLVRESSAFFSKGHATFDEWTAADNGAIADTIQTFAAKSKLIERKMQDVHSLVPKEMFQHPSGMPIEPDVMMEGYLYKRSSNAFKTWNRRWFQIKDKQLLYSHRSTDLEPATIMEENLRICLVRPAPSNIDRIGCFELVTPTRIHLLQADSESLCQDWMRALQRTILALHEGDSVDVASTSPRNKTTSMSSGVTLTSANAISPLSNAMDVTKGRSVSDPASTYTSANTSSISTAAGFSSSTTAFEQVRRVPGNEVCADCGSPAPKWVSINLGVVLCIECSGAHRSLGVQTSKVRSLCMDSIDNELRDVLLALGNRQVNEIFLAHLPPADSIVPPQINEKSARPAREAWIKAKYVERRFAVAEDTRARSSATNRQEHLKHKTSIGGNSSSNGVNRSSSYADVQDAESGGLLDADPWSADLSVPVPTASKRLSACGSDTNLDAIGSSSIDTKTVEWDSVKEACECGDLLALMTAYAQGFDLNALHNGTTALHIATRNGQTAAVEFLLLNGAKINMLDEKLNTPLHLAAKEGHTLPVCQLLKRGADSNLANVDSKTPLDIAMECTHADIVTLFRVTIMRNDFNADFNNPMDETVEAVISDIARRAATEKEQKKTESLKSTSDI.

One can recognise a PH domain in the interval Asp275–Leu373. The 126-residue stretch at Thr447–Ala572 folds into the Arf-GAP domain. The C4-type zinc finger occupies Cys462–Cys485. The interval Thr570–Tyr604 is disordered. The span at Ser588–Ser603 shows a compositional bias: low complexity. ANK repeat units lie at residues Asn690–Met719, Lys723–Leu752, and Asp756–Phe789.

In terms of assembly, interacts (via C-terminal ankyrin repeat) with rab-10 (GTP-bound form); the interaction is required for cnt-1 recruitment to endosomes. Interacts (via C-terminal ankyrin repeat) with rab-8 (GTP-bound form) and rab-35 (GTP-bound form). Post-translationally, cleaved by caspase ced-3 after Asp-382 and Asp-609. Cleavage at Asp-382 is required for subsequent cleavage at Asp-609.

The protein resides in the cytoplasm. The protein localises to the recycling endosome membrane. It is found in the basolateral cell membrane. It localises to the apical cell membrane. Its subcellular location is the cell membrane. GTPase-activating protein for the ADP ribosylation factor family. Regulates endosome recycling downstream of rab-10 and upstream of arf-6. Functionally, promotes apoptosis during embryonic development. Produced by caspase ced-3-mediated cleavage, and translocates to the plasma membrane where it prevents the activation of the prosurvival Akt-1/2 and sgk-1 signaling pathway by competing with Akt-1/2 for the binding to PtdIns(3,4,5)P3. The protein is Arf-GAP with ANK repeat and PH domain-containing protein cnt-1 of Caenorhabditis elegans.